Consider the following 479-residue polypeptide: Anaerobic nitric oxide reductase flavorubredoxin (479 aa).

The zinc metallo-hydrolase stretch occupies residues 30–210; sequence LRGSSYNSYL…PFSRLVTPKI (181 aa). Residues His79, Glu81, Asp83, His147, Asp166, and His227 each contribute to the Fe cation site. Residues 254-393 form the Flavodoxin-like domain; sequence ITIFYDTMSN…LCREHGREIA (140 aa). Residues 260-264 and 342-369 contribute to the FMN site; these read TMSNN and AFGSHGWSGGAVDRLSTRLQDAGFEMSL. Residues 423-474 enclose the Rubredoxin-like domain; it reads GPRMQCSVCQWIYDPAKGEPMQDVAPGTPWSEVPDNFLCPECSLGKDVFDEL. Residues Cys428, Cys431, Cys461, and Cys464 each contribute to the Fe cation site.

It in the N-terminal section; belongs to the zinc metallo-hydrolase group 3 family. As to quaternary structure, homotetramer. Fe cation serves as cofactor. FMN is required as a cofactor.

It is found in the cytoplasm. Its pathway is nitrogen metabolism; nitric oxide reduction. In terms of biological role, anaerobic nitric oxide reductase; uses NADH to detoxify nitric oxide (NO), protecting several 4Fe-4S NO-sensitive enzymes. Has at least 2 reductase partners, only one of which (NorW, flavorubredoxin reductase) has been identified. NO probably binds to the di-iron center; electrons enter from the NorW at rubredoxin and are transferred sequentially to the FMN center and the di-iron center. Also able to function as an aerobic oxygen reductase. This Escherichia coli O6:H1 (strain CFT073 / ATCC 700928 / UPEC) protein is Anaerobic nitric oxide reductase flavorubredoxin.